Consider the following 280-residue polypeptide: Ribose-phosphate pyrophosphokinase (280 aa).

ATP is bound by residues 32–34 (DGE) and 89–90 (RQ). Positions 122 and 160 each coordinate Mg(2+). The active site involves Lys183. D-ribose 5-phosphate-binding positions include Arg185, Asp209, and 213-217 (STGGT).

It belongs to the ribose-phosphate pyrophosphokinase family. Class III (archaeal) subfamily. Mg(2+) is required as a cofactor.

It is found in the cytoplasm. It catalyses the reaction D-ribose 5-phosphate + ATP = 5-phospho-alpha-D-ribose 1-diphosphate + AMP + H(+). It participates in metabolic intermediate biosynthesis; 5-phospho-alpha-D-ribose 1-diphosphate biosynthesis; 5-phospho-alpha-D-ribose 1-diphosphate from D-ribose 5-phosphate (route I): step 1/1. Its activity is regulated as follows. Activated by Co(2+) and Ni(2+) ions, however Mg(2+) ion shows almost no significant effect on the activity. Equally inhibited by ADP, CTP and GTP, while dTTP and UTP are less inhibitory. Functionally, involved in the biosynthesis of the central metabolite phospho-alpha-D-ribosyl-1-pyrophosphate (PRPP) via the transfer of pyrophosphoryl group from ATP to 1-hydroxyl of ribose-5-phosphate (Rib-5-P). It can also use CTP and GTP as substrates in addition to ATP. The protein is Ribose-phosphate pyrophosphokinase of Thermococcus kodakarensis (strain ATCC BAA-918 / JCM 12380 / KOD1) (Pyrococcus kodakaraensis (strain KOD1)).